A 671-amino-acid chain; its full sequence is Probable potassium transport system protein Kup 2 (671 aa).

Helical transmembrane passes span 18–38 (GFLIALGIVYGDIGTSPLYAM), 60–80 (VSLVIWTLTLITTVKYVLIAL), 103–123 (WLIIPAMIGGATLLADGALTP), 146–166 (AVMVTTLIILAFLFLIQRFGA), 173–193 (FGPIMFIWFGFLGVSGLINSF), 218–238 (AGFFILGSIFLVTTGAEALYS), 252–272 (WPFVKICIILSYCGQGAWLLA), 292–312 (MVIYVVILSTLAAIIASQALI), 343–363 (LYIPAVNFALWVTTSFFVLYF), 373–393 (YSLAITITMLMTTTLLTYFLI), 402–422 (IAIISIGLFCIEGSFFAASLV), and 424–444 (FINGAYIVVLIALAIIFVMFI).

The protein belongs to the HAK/KUP transporter (TC 2.A.72) family.

It localises to the cell membrane. The catalysed reaction is K(+)(in) + H(+)(in) = K(+)(out) + H(+)(out). Functionally, transport of potassium into the cell. Likely operates as a K(+):H(+) symporter. The chain is Probable potassium transport system protein Kup 2 from Lactococcus lactis subsp. lactis (strain IL1403) (Streptococcus lactis).